Reading from the N-terminus, the 215-residue chain is Large ribosomal subunit protein uL3 (215 aa).

At Q153 the chain carries N5-methylglutamine.

It belongs to the universal ribosomal protein uL3 family. Part of the 50S ribosomal subunit. Forms a cluster with proteins L14 and L19. Post-translationally, methylated by PrmB.

One of the primary rRNA binding proteins, it binds directly near the 3'-end of the 23S rRNA, where it nucleates assembly of the 50S subunit. The polypeptide is Large ribosomal subunit protein uL3 (Nitrosococcus oceani (strain ATCC 19707 / BCRC 17464 / JCM 30415 / NCIMB 11848 / C-107)).